An 80-amino-acid chain; its full sequence is Omega-conotoxin-like 1 (80 aa).

An N-terminal signal peptide occupies residues 1–22 (MKLTCVLIVVVLFLTACQLITT). Positions 23–49 (DDSTGKQRYQAWKLRSKMQNSVLSRLS) are excised as a propeptide. 3 disulfide bridges follow: cysteine 52–cysteine 66, cysteine 59–cysteine 70, and cysteine 65–cysteine 79.

The protein belongs to the conotoxin O1 superfamily. Peptide predicted to begin at Arg-51, but it seems more probable that it begins at Cys-52, since this position corresponds to a dibasic residue cleavage. In terms of tissue distribution, expressed by the venom duct.

Its subcellular location is the secreted. Omega-conotoxins act at presynaptic membranes, they bind and block voltage-gated calcium channels (Cav). This chain is Omega-conotoxin-like 1, found in Conus capitaneus (Captain cone).